The sequence spans 293 residues: Methylsterol monooxygenase 1 (293 aa).

Transmembrane regions (helical) follow at residues 55 to 75 and 100 to 120; these read LIVH…FQFI and KILF…YYFT. A Fatty acid hydroxylase domain is found at 144 to 274; it reads GCAVIEDTWH…FTWWDKLFGT (131 aa). The Histidine box-1 motif lies at 157–161; the sequence is HRLLH. Positions 170-174 match the Histidine box-2 motif; it reads HKVHH. The helical transmembrane segment at 199-219 threads the bilayer; the sequence is FFIGIVLLCDHVILLWAWVTI. The Histidine box-3 motif lies at 249 to 255; that stretch reads HHDFHHM.

It belongs to the sterol desaturase family. Fe cation is required as a cofactor. In terms of processing, ubiquitinated by MARCHF6, leading to proteasomal degradation.

It localises to the endoplasmic reticulum membrane. It catalyses the reaction 4,4-dimethyl-5alpha-cholest-7-en-3beta-ol + 6 Fe(II)-[cytochrome b5] + 3 O2 + 5 H(+) = 4alpha-carboxy-4beta-methyl-5alpha-cholest-7-ene-3beta-ol + 6 Fe(III)-[cytochrome b5] + 4 H2O. The catalysed reaction is 4,4-dimethyl-5alpha-cholesta-8,24-dien-3beta-ol + 6 Fe(II)-[cytochrome b5] + 3 O2 + 5 H(+) = 4beta-methylzymosterol-4alpha-carboxylate + 6 Fe(III)-[cytochrome b5] + 4 H2O. It carries out the reaction 4alpha-methylzymosterol + 6 Fe(II)-[cytochrome b5] + 3 O2 + 5 H(+) = 4alpha-carboxyzymosterol + 6 Fe(III)-[cytochrome b5] + 4 H2O. The enzyme catalyses 4alpha-methyl-5alpha-cholest-7-en-3beta-ol + 6 Fe(II)-[cytochrome b5] + 3 O2 + 5 H(+) = 4alpha-carboxy-5alpha-cholest-7-en-3beta-ol + 6 Fe(III)-[cytochrome b5] + 4 H2O. It catalyses the reaction 4,4-dimethyl-5alpha-cholest-8-en-3beta-ol + 6 Fe(II)-[cytochrome b5] + 3 O2 + 5 H(+) = 4alpha-carboxy-4beta-methyl-5alpha-cholest-8-en-3beta-ol + 6 Fe(III)-[cytochrome b5] + 4 H2O. The catalysed reaction is 4alpha-methyl-5alpha-cholest-8-en-3beta-ol + 6 Fe(II)-[cytochrome b5] + 3 O2 + 5 H(+) = 4alpha-carboxy-5alpha-cholest-8-ene-3beta-ol + 6 Fe(III)-[cytochrome b5] + 4 H2O. It participates in steroid biosynthesis; zymosterol biosynthesis; zymosterol from lanosterol: step 3/6. It functions in the pathway steroid biosynthesis; cholesterol biosynthesis. In terms of biological role, catalyzes the three-step monooxygenation required for the demethylation of 4,4-dimethyl and 4alpha-methylsterols, which can be subsequently metabolized to cholesterol. The sequence is that of Methylsterol monooxygenase 1 (Msmo1) from Mus musculus (Mouse).